The chain runs to 177 residues: B-phycoerythrin beta chain (177 aa).

(2R,3E)-phycoerythrobilin-binding positions include Lys-28, Asn-35, Asp-39, Cys-50, Asp-54, Cys-61, Asn-72, 77–78 (RR), Cys-82, Arg-129, 147–148 (SQ), 154–158 (PQGDC), and Cys-158. Position 72 is an N4-methylasparagine (Asn-72).

It belongs to the phycobiliprotein family. As to quaternary structure, heterotetramer of 2 different alpha chains and 2 identical beta chains. The subunit composition could comprise any combination of 2 out of 4 different alpha units with an invariant beta unit. In terms of processing, contains three covalently linked phycoerythrobilin chromophores.

The protein localises to the plastid. Its subcellular location is the chloroplast thylakoid membrane. Functionally, light-harvesting photosynthetic tetrapyrrole chromophore-protein from the phycobiliprotein complex. The chain is B-phycoerythrin beta chain (cpeB) from Rhodomonas sp. (strain CS 24) (Chroomonas sp. (strain CS24)).